Reading from the N-terminus, the 61-residue chain is Alpha-conotoxin CnIJ (61 aa).

The first 17 residues, 1 to 17, serve as a signal peptide directing secretion; it reads MMFTVFLLVVLTTTVVS. The propeptide occupies 18-44; that stretch reads FPSDSASDGRDDEAKDERSDMYELKRN. 2 disulfides stabilise this stretch: Cys47–Cys52 and Cys48–Cys59. Cys59 carries the post-translational modification Cysteine amide.

Belongs to the conotoxin A superfamily. Expressed by the venom duct.

The protein resides in the secreted. The protein is Alpha-conotoxin CnIJ of Conus consors (Singed cone).